The sequence spans 372 residues: MATGTIVIKIGSSSLTDGNGALSTERLRGHVEAICELRHQGINVIVVTSGAVAAGFTLIGYHQRPKSISQKQAAAAVGQSLLMQAYMDAFRLHGYTAAQLLLTRADFADPARFSNISQTLRELLKRGAIPVINENDSTSVDELTFGDNDRLSALVSGIIHADMLCLYTDVNGVYDQNPNDSPNAKKYHYLASVPEALLDRVSADTSAVGTGGMKSKLLAAKTAIELGTNVFIGNGKGRETFTDVLLGKGDGTYLGPFTNKTMSTTKQWIVFHSEPAGSIEIDSGASTALLKRGKSLLPAGVLSAKGDFSAGDIIEVFFNNRPIGKGKTNFSKHELELIKGLNSEEALSLTKRSKKAVIHRDFWVATKKECSY.

K9 provides a ligand contact to ATP. The substrate site is built by S49, D136, and N148. ATP-binding positions include T168–D169 and T210–K216. The 78-residue stretch at A276 to S353 folds into the PUA domain.

It belongs to the glutamate 5-kinase family.

It is found in the cytoplasm. The catalysed reaction is L-glutamate + ATP = L-glutamyl 5-phosphate + ADP. It functions in the pathway amino-acid biosynthesis; L-proline biosynthesis; L-glutamate 5-semialdehyde from L-glutamate: step 1/2. In terms of biological role, catalyzes the transfer of a phosphate group to glutamate to form L-glutamate 5-phosphate. The polypeptide is Glutamate 5-kinase (Shouchella clausii (strain KSM-K16) (Alkalihalobacillus clausii)).